Consider the following 31-residue polypeptide: Conotoxin pc6b (31 aa).

Intrachain disulfides connect cysteine 2–cysteine 20, cysteine 9–cysteine 25, and cysteine 19–cysteine 29.

It belongs to the conotoxin O1 superfamily. As to expression, expressed by the venom duct.

It localises to the secreted. In Conus pictus (Cone snail), this protein is Conotoxin pc6b.